The chain runs to 433 residues: Serine--tRNA ligase (433 aa).

235–237 (TSE) lines the L-serine pocket. Residue 266–268 (RSE) participates in ATP binding. Residue Glu289 coordinates L-serine. 353–356 (EISS) contributes to the ATP binding site. L-serine is bound at residue Ser388.

Belongs to the class-II aminoacyl-tRNA synthetase family. Type-1 seryl-tRNA synthetase subfamily. In terms of assembly, homodimer. The tRNA molecule binds across the dimer.

It is found in the cytoplasm. It catalyses the reaction tRNA(Ser) + L-serine + ATP = L-seryl-tRNA(Ser) + AMP + diphosphate + H(+). The catalysed reaction is tRNA(Sec) + L-serine + ATP = L-seryl-tRNA(Sec) + AMP + diphosphate + H(+). Its pathway is aminoacyl-tRNA biosynthesis; selenocysteinyl-tRNA(Sec) biosynthesis; L-seryl-tRNA(Sec) from L-serine and tRNA(Sec): step 1/1. Catalyzes the attachment of serine to tRNA(Ser). Is also able to aminoacylate tRNA(Sec) with serine, to form the misacylated tRNA L-seryl-tRNA(Sec), which will be further converted into selenocysteinyl-tRNA(Sec). This chain is Serine--tRNA ligase, found in Burkholderia orbicola (strain MC0-3).